A 505-amino-acid polypeptide reads, in one-letter code: Lysine--tRNA ligase (505 aa).

2 residues coordinate Mg(2+): E415 and E422.

It belongs to the class-II aminoacyl-tRNA synthetase family. In terms of assembly, homodimer. Mg(2+) serves as cofactor.

The protein resides in the cytoplasm. The enzyme catalyses tRNA(Lys) + L-lysine + ATP = L-lysyl-tRNA(Lys) + AMP + diphosphate. The polypeptide is Lysine--tRNA ligase (Salmonella arizonae (strain ATCC BAA-731 / CDC346-86 / RSK2980)).